Here is a 627-residue protein sequence, read N- to C-terminus: Phosphomethylpyrimidine synthase (627 aa).

The span at 1–21 shows a compositional bias: polar residues; sequence MSAQQQKNLSESAQVDQQSVQ. The tract at residues 1–32 is disordered; it reads MSAQQQKNLSESAQVDQQSVQPFPRSQKVYVQ. Residues Asn231, Met260, Tyr289, His325, 345-347, 386-389, and Glu425 each bind substrate; these read SRG and DGLR. His429 serves as a coordination point for Zn(2+). Residue Tyr452 coordinates substrate. His493 contributes to the Zn(2+) binding site. [4Fe-4S] cluster contacts are provided by Cys573, Cys576, and Cys581.

It belongs to the ThiC family. Homodimer. Requires [4Fe-4S] cluster as cofactor.

It catalyses the reaction 5-amino-1-(5-phospho-beta-D-ribosyl)imidazole + S-adenosyl-L-methionine = 4-amino-2-methyl-5-(phosphooxymethyl)pyrimidine + CO + 5'-deoxyadenosine + formate + L-methionine + 3 H(+). Its pathway is cofactor biosynthesis; thiamine diphosphate biosynthesis. Catalyzes the synthesis of the hydroxymethylpyrimidine phosphate (HMP-P) moiety of thiamine from aminoimidazole ribotide (AIR) in a radical S-adenosyl-L-methionine (SAM)-dependent reaction. The polypeptide is Phosphomethylpyrimidine synthase (Ectopseudomonas mendocina (strain ymp) (Pseudomonas mendocina)).